Here is a 555-residue protein sequence, read N- to C-terminus: Methionine--tRNA ligase (555 aa).

Residues 13-23 carry the 'HIGH' region motif; sequence PYANGSLHIGH. 4 residues coordinate Zn(2+): Cys-144, Cys-147, Cys-157, and Cys-160. The 'KMSKS' region signature appears at 330–334; that stretch reads KISKS. ATP is bound at residue Lys-333.

This sequence belongs to the class-I aminoacyl-tRNA synthetase family. MetG type 1 subfamily. In terms of assembly, monomer. The cofactor is Zn(2+).

Its subcellular location is the cytoplasm. It carries out the reaction tRNA(Met) + L-methionine + ATP = L-methionyl-tRNA(Met) + AMP + diphosphate. Its function is as follows. Is required not only for elongation of protein synthesis but also for the initiation of all mRNA translation through initiator tRNA(fMet) aminoacylation. The chain is Methionine--tRNA ligase from Blochmanniella pennsylvanica (strain BPEN).